Here is a 366-residue protein sequence, read N- to C-terminus: Chorismate synthase (366 aa).

Positions 48 and 54 each coordinate NADP(+). Residues 125 to 127 (RSS), 238 to 239 (NA), Gly278, 293 to 297 (KPTSS), and Arg319 each bind FMN.

The protein belongs to the chorismate synthase family. In terms of assembly, homotetramer. FMNH2 is required as a cofactor.

The enzyme catalyses 5-O-(1-carboxyvinyl)-3-phosphoshikimate = chorismate + phosphate. It participates in metabolic intermediate biosynthesis; chorismate biosynthesis; chorismate from D-erythrose 4-phosphate and phosphoenolpyruvate: step 7/7. Its function is as follows. Catalyzes the anti-1,4-elimination of the C-3 phosphate and the C-6 proR hydrogen from 5-enolpyruvylshikimate-3-phosphate (EPSP) to yield chorismate, which is the branch point compound that serves as the starting substrate for the three terminal pathways of aromatic amino acid biosynthesis. This reaction introduces a second double bond into the aromatic ring system. In Neisseria meningitidis serogroup C / serotype 2a (strain ATCC 700532 / DSM 15464 / FAM18), this protein is Chorismate synthase.